The chain runs to 312 residues: Protein lon-1 (312 aa).

The N-terminal stretch at 1–18 (MNYLLTALIALLAPISVA) is a signal peptide. Residues 87 to 209 (EHNRYRRMVP…GHRNVFVCHY (123 aa)) form the SCP domain. A glycan (N-linked (GlcNAc...) asparagine) is linked at Asn142. Residues 265–284 (TTTTESTTTSTTTEEPTTTC) are compositionally biased toward low complexity. The disordered stretch occupies residues 265 to 312 (TTTTESTTTSTTTEEPTTTCEPDEPEAEGADNNQEEEEENNDGFRMRV). A compositionally biased stretch (acidic residues) spans 285–305 (EPDEPEAEGADNNQEEEEENN).

Belongs to the CRISP family. As to expression, expressed in hypodermal tissues.

Regulates body size morphogenesis, but does not affect male tail development. The protein is Protein lon-1 (lon-1) of Caenorhabditis elegans.